The primary structure comprises 166 residues: Myosin regulatory light chain 2, ventricular/cardiac muscle isoform (166 aa).

Ser2 is subject to N,N,N-trimethylserine. Asn14 carries the deamidated asparagine modification. Ser19 carries the post-translational modification Phosphoserine. EF-hand domains follow at residues 24–59, 94–129, and 130–165; these read TQIQ…LGRV, DPEE…QAER, and FSKE…GEEK. Residues Asp37, Asn39, Asp41, and Asp48 each contribute to the Ca(2+) site. Thr52 is modified (phosphothreonine).

In terms of assembly, myosin is a hexamer of 2 heavy chains and 4 light chains. Interacts with MYOC. Post-translationally, N-terminus is methylated by METTL11A/NTM1. Phosphorylated by MYLK3 and MYLK2; promotes cardiac muscle contraction and function. Dephosphorylated by PPP1CB complexed to PPP1R12B. The phosphorylated form in adult is expressed as gradients across the heart from endocardium (low phosphorylation) to epicardium (high phosphorylation); regulates cardiac torsion and workload distribution.

Its subcellular location is the cytoplasm. It localises to the myofibril. It is found in the sarcomere. The protein localises to the a band. Contractile protein that plays a role in heart development and function. Following phosphorylation, plays a role in cross-bridge cycling kinetics and cardiac muscle contraction by increasing myosin lever arm stiffness and promoting myosin head diffusion; as a consequence of the increase in maximum contraction force and calcium sensitivity of contraction force. These events altogether slow down myosin kinetics and prolong duty cycle resulting in accumulated myosins being cooperatively recruited to actin binding sites to sustain thin filament activation as a means to fine-tune myofilament calcium sensitivity to force. During cardiogenesis plays an early role in cardiac contractility by promoting cardiac myofibril assembly. This chain is Myosin regulatory light chain 2, ventricular/cardiac muscle isoform, found in Bos taurus (Bovine).